The primary structure comprises 460 residues: MKIKEQFFFKQEASKNKIHFISLGCSRNLVDTEVMLGILLKSGYEATESLEEADYLILNTCAFLKAARDESTDYLQRIIKAKKETAKIILTGCMVSKHKEELKPLLPHIHYVLGSGDVEHILSAIESKEYGEKISSKSYLEMGEIPRKLSTPKHYAYLKIAEGCRKRCAFCIIPTIKGALRSKPLDQIIKEFRLLLKMGVKEIILIAQDLGDYGKDFSADRKSCLDKVLKEMLKEPGDYWIRMLYLYPDEVDDTIIDLMESDHRLLPYVDIPLQHINNRVLKKMLRTTSKEQILDLLTKLRTRIPHIYIRSSFIVGFPGETDDEFQDLVDFVREGWIDNLGIFSYSQEEGSVAADMPDQVSQSVKSKRLKILSQAQKQNVEKHNQKLVGQVVEAVIDGYHPDSELLLTARFYGQAPEVDPCIIVNEARLVSGFGERYLIEITGYVGYDLIGRVVKKAPGE.

The MTTase N-terminal domain maps to 16-130; the sequence is NKIHFISLGC…ILSAIESKEY (115 aa). [4Fe-4S] cluster-binding residues include cysteine 25, cysteine 61, cysteine 93, cysteine 164, cysteine 168, and cysteine 171. The Radical SAM core domain maps to 150–382; sequence STPKHYAYLK…SQAQKQNVEK (233 aa). In terms of domain architecture, TRAM spans 385 to 455; that stretch reads QKLVGQVVEA…GYDLIGRVVK (71 aa).

Belongs to the methylthiotransferase family. RimO subfamily. It depends on [4Fe-4S] cluster as a cofactor.

The protein resides in the cytoplasm. The enzyme catalyses L-aspartate(89)-[ribosomal protein uS12]-hydrogen + (sulfur carrier)-SH + AH2 + 2 S-adenosyl-L-methionine = 3-methylsulfanyl-L-aspartate(89)-[ribosomal protein uS12]-hydrogen + (sulfur carrier)-H + 5'-deoxyadenosine + L-methionine + A + S-adenosyl-L-homocysteine + 2 H(+). In terms of biological role, catalyzes the methylthiolation of an aspartic acid residue of ribosomal protein uS12. In Chlamydia felis (strain Fe/C-56) (Chlamydophila felis), this protein is Ribosomal protein uS12 methylthiotransferase RimO.